Here is a 152-residue protein sequence, read N- to C-terminus: Ribosome maturation factor RimP (152 aa).

The protein belongs to the RimP family.

It localises to the cytoplasm. In terms of biological role, required for maturation of 30S ribosomal subunits. This Photorhabdus laumondii subsp. laumondii (strain DSM 15139 / CIP 105565 / TT01) (Photorhabdus luminescens subsp. laumondii) protein is Ribosome maturation factor RimP.